The sequence spans 485 residues: Ribulose bisphosphate carboxylase large chain (485 aa).

N124 and T174 together coordinate substrate. The Proton acceptor role is filled by K176. K178 lines the substrate pocket. 3 residues coordinate Mg(2+): K202, D204, and E205. An N6-carboxylysine modification is found at K202. The active-site Proton acceptor is the H294. Substrate-binding residues include R295, H327, and S379.

It belongs to the RuBisCO large chain family. Type I subfamily. In terms of assembly, heterohexadecamer of 8 large chains and 8 small chains. Requires Mg(2+) as cofactor.

The catalysed reaction is 2 (2R)-3-phosphoglycerate + 2 H(+) = D-ribulose 1,5-bisphosphate + CO2 + H2O. It carries out the reaction D-ribulose 1,5-bisphosphate + O2 = 2-phosphoglycolate + (2R)-3-phosphoglycerate + 2 H(+). Functionally, ruBisCO catalyzes two reactions: the carboxylation of D-ribulose 1,5-bisphosphate, the primary event in carbon dioxide fixation, as well as the oxidative fragmentation of the pentose substrate in the photorespiration process. Both reactions occur simultaneously and in competition at the same active site. This chain is Ribulose bisphosphate carboxylase large chain, found in Rhodopseudomonas palustris (strain BisB18).